The sequence spans 220 residues: Vesicle-associated membrane protein 7 (220 aa).

The residue at position 2 (Ala2) is an N-acetylalanine; partial. At 2–188 (AILFAVVARG…ARAMCMKNLK (187 aa)) the chain is on the cytoplasmic side. The Longin domain occupies 7 to 110 (VVARGTTILA…AMNSEFSSVL (104 aa)). The region spanning 125–185 (KVMETQAQVD…RNLARAMCMK (61 aa)) is the v-SNARE coiled-coil homology domain. Residues Ser167 and Ser168 each carry the phosphoserine modification. Residues 189-209 (LTIIIIIVSIVFIYIIVSPLC) form a helical; Anchor for type IV membrane protein membrane-spanning segment. Over 210–220 (GGFTWPSCVKK) the chain is Vesicular.

Belongs to the synaptobrevin family. Component of the SNARE complex composed of STX4, SNAP23 and VAMP7 that binds SYT7 during lysosomal exocytosis. Component of the SNARE complex composed of STX7, STX8, VAMP7 and VTI1B that is required for heterotypic fusion of late endosomes with lysosomes. May interact with STX17. Interacts with PICALM. Interacts with RAB21. As to expression, detected in all tissues tested.

The protein resides in the cytoplasmic vesicle. Its subcellular location is the secretory vesicle membrane. It localises to the golgi apparatus. It is found in the trans-Golgi network membrane. The protein localises to the late endosome membrane. The protein resides in the lysosome membrane. Its subcellular location is the endoplasmic reticulum membrane. It localises to the phagosome membrane. It is found in the synapse. The protein localises to the synaptosome. In terms of biological role, involved in the targeting and/or fusion of transport vesicles to their target membrane during transport of proteins from the early endosome to the lysosome. Required for heterotypic fusion of late endosomes with lysosomes and homotypic lysosomal fusion. Required for calcium regulated lysosomal exocytosis. Involved in the export of chylomicrons from the endoplasmic reticulum to the cis Golgi. Required for exocytosis of mediators during eosinophil and neutrophil degranulation, and target cell killing by natural killer cells. Required for focal exocytosis of late endocytic vesicles during phagosome formation. In Homo sapiens (Human), this protein is Vesicle-associated membrane protein 7 (VAMP7).